The following is a 480-amino-acid chain: uncharacterized protein (480 aa).

This is an uncharacterized protein from Xylella fastidiosa (strain 9a5c).